The following is a 1004-amino-acid chain: Glutamate [NMDA] receptor subunit 1 (1004 aa).

Positions 1–39 are cleaved as a signal peptide; the sequence is MAGTDSPAAARFVYRCLLFAPAIVVGLLLPLTLPPIAAA. Residues 40-585 are Extracellular-facing; that stretch reads QRHTASDNPS…TLVSFLQPFS (546 aa). Asn270, Asn326, Asn357, Asn409, Asn466, Asn493, and Asn513 each carry an N-linked (GlcNAc...) asparagine glycan. Glycine-binding positions include 542–544 and Arg549; that span reads PLT. Residues 586–606 form a helical membrane-spanning segment; that stretch reads NTLWILVMVSVHVVALVLYLL. Over 607–663 the chain is Cytoplasmic; it reads DRFSPFGRFKLSHSDSNEEKALNLSSAVWFAWGVLLNSGIGEGTPRSFSARVLGMVW. Residues 664–684 traverse the membrane as a helical segment; it reads AGFAMIIVASYTANLAAFLVL. Over 685 to 843 the chain is Extracellular; sequence ERPKTKLSGI…KTPNTLGLKN (159 aa). A glycan (N-linked (GlcNAc...) asparagine) is linked at Asn705. Glycine is bound by residues Ser715 and Asp759. Residues 844–864 form a helical membrane-spanning segment; the sequence is MAGVFILVGVGIAGGVGLIII. Residues 865 to 1004 lie on the Cytoplasmic side of the membrane; sequence EVIYKKHQVK…YTSDVSHLVV (140 aa). A disordered region spans residues 980-1004; the sequence is TRPQQNILPPRYSPGYTSDVSHLVV. A compositionally biased stretch (polar residues) spans 994–1004; sequence GYTSDVSHLVV.

The protein belongs to the glutamate-gated ion channel (TC 1.A.10.1) family. As to quaternary structure, forms a heteromeric NMDA channel with Nmdar2.

The protein resides in the cell membrane. It localises to the postsynaptic cell membrane. The protein localises to the postsynaptic density. NMDA receptor subtype of glutamate-gated ion channels with high calcium permeability and voltage-dependent sensitivity to magnesium. Mediated by glycine. This protein plays a key role in synaptic plasticity, synaptogenesis, excitotoxicity, memory acquisition and learning. It mediates neuronal functions in glutamate neurotransmission. Is involved in the cell surface targeting of NMDA receptors. Plays a role in associative learning and in long-term memory consolidation. The protein is Glutamate [NMDA] receptor subunit 1 of Drosophila persimilis (Fruit fly).